Reading from the N-terminus, the 27-residue chain is Malate dehydrogenase (27 aa).

Residue 9–14 (GAGNIG) participates in NAD(+) binding.

Belongs to the LDH/MDH superfamily. MDH type 3 family.

It carries out the reaction (S)-malate + NAD(+) = oxaloacetate + NADH + H(+). Functionally, catalyzes the reversible oxidation of malate to oxaloacetate. The protein is Malate dehydrogenase (mdh) of Rhodospirillum rubrum.